A 331-amino-acid chain; its full sequence is Centriolar satellite-associated tubulin polyglutamylase complex regulator 1 (331 aa).

The required for interaction with PCM1 stretch occupies residues 1–111; it reads MLSPERLALP…HCLLQLLCPD (111 aa). The required for interaction with TPGS1, LRRC49, and TTLL1 stretch occupies residues 1–225; it reads MLSPERLALP…SCPPPALVKE (225 aa). A required for interaction with TPGS2 region spans residues 112–331; that stretch reads FPLELTQKAA…STEETDESET (220 aa). The interval 292-331 is disordered; sequence SCLPSRTPPRVGSPWKPLHRSRKLDAESDGSTEETDESET. Residues 318-331 show a composition bias toward acidic residues; it reads ESDGSTEETDESET. At Ser-319 the chain carries Phosphoserine.

The protein belongs to the CSTPP1 family. Interacts with PCM1. Interacts with TTLL1, TPGS1, TPGS2 and LRRC49; the interactions link CSTPP1 to the complex TPGC. Binds to alpha-tubulin.

The protein localises to the cytoplasm. It is found in the cytoskeleton. It localises to the microtubule organizing center. The protein resides in the centrosome. Its subcellular location is the centriolar satellite. Functionally, regulator of the tubulin polyglutamylase complex (TPGC) that controls cytoskeletal organization, nuclear shape, and cilium disassembly by balancing microtubule and actin assembly. Regulates the assembly and stability of the TPGC and thereby modulates polyglutamylation of the microtubule, which antagonizes MAP4 binding. The chain is Centriolar satellite-associated tubulin polyglutamylase complex regulator 1 (Cstpp1) from Rattus norvegicus (Rat).